Consider the following 292-residue polypeptide: Protease HtpX homolog (292 aa).

2 consecutive transmembrane segments (helical) span residues 4-24 (IALFLLTNVAVVVVLGIVASL) and 38-58 (LGALLGFAFIMGFGGAIISLL). Residue His144 participates in Zn(2+) binding. Glu145 is an active-site residue. His148 contacts Zn(2+). 2 helical membrane-spanning segments follow: residues 152-172 (GDMVTMALIQGVMNTFVVFLS) and 199-219 (ITTIVLDIVLGFLAAIIVAWF). Glu224 is a Zn(2+) binding site.

Belongs to the peptidase M48B family. The cofactor is Zn(2+).

It is found in the cell inner membrane. The sequence is that of Protease HtpX homolog from Acidovorax ebreus (strain TPSY) (Diaphorobacter sp. (strain TPSY)).